A 553-amino-acid polypeptide reads, in one-letter code: Putative transport protein YidE (553 aa).

Transmembrane regions (helical) follow at residues 4-24 (IALT…IGNV), 28-48 (GIGL…HFVS), 65-85 (FGLI…FFAS), 95-115 (LFAV…HKLF), and 158-178 (MSYA…MWML). RCK C-terminal domains lie at 191–276 (QQHE…VIGQ) and 279–361 (DTSL…VLGN). Helical transmembrane passes span 371 to 391 (MLPV…PVFV), 393 to 413 (GFPA…ALIL), 439 to 459 (IVLF…NTLV), 464 to 484 (LSWI…VGIL), 493 to 513 (YLTM…LAFA), and 533 to 553 (LVMF…WSIG).

This sequence belongs to the AAE transporter (TC 2.A.81) family. YidE subfamily.

The protein resides in the cell membrane. The chain is Putative transport protein YidE from Shigella boydii serotype 18 (strain CDC 3083-94 / BS512).